A 337-amino-acid chain; its full sequence is Transmembrane protein 120B (337 aa).

Residues 1 to 39 (MSLERCQSEWTEIEQEYQQLQETHKVYRQKLEELTNLQA) adopt a coiled-coil conformation. 6 consecutive transmembrane segments (helical) span residues 100–122 (GLYLNLVLGNVNVTLLSNQAKFA), 130–150 (FKLYMTIILMFGAVTCLFLLN), 157–175 (IFNFLLVWYYCTLTIRESI), 185–205 (GWWVSHHYVSTFLSGVMLTWP), 268–288 (FLLPFLFFGHFWQLYNAVTLF), and 300–320 (QVFMLALTFLVLFLGNFLTTL).

It belongs to the TMEM120 family.

The protein resides in the nucleus inner membrane. In terms of biological role, necessary for efficient adipogenesis. Does not show ion channel activity. This chain is Transmembrane protein 120B (tmem120b), found in Danio rerio (Zebrafish).